A 469-amino-acid chain; its full sequence is 3-isopropylmalate dehydratase large subunit (469 aa).

The [4Fe-4S] cluster site is built by C347, C407, and C410.

Belongs to the aconitase/IPM isomerase family. LeuC type 1 subfamily. In terms of assembly, heterodimer of LeuC and LeuD. [4Fe-4S] cluster serves as cofactor.

The enzyme catalyses (2R,3S)-3-isopropylmalate = (2S)-2-isopropylmalate. Its pathway is amino-acid biosynthesis; L-leucine biosynthesis; L-leucine from 3-methyl-2-oxobutanoate: step 2/4. Functionally, catalyzes the isomerization between 2-isopropylmalate and 3-isopropylmalate, via the formation of 2-isopropylmaleate. In Proteus mirabilis (strain HI4320), this protein is 3-isopropylmalate dehydratase large subunit.